Here is a 491-residue protein sequence, read N- to C-terminus: 2-aminomuconic 6-semialdehyde dehydrogenase (491 aa).

Active-site residues include E252 and C286.

It belongs to the aldehyde dehydrogenase family. In terms of assembly, homotrimer.

It catalyses the reaction 2-aminomuconate 6-semialdehyde + NAD(+) + H2O = (2Z,4E)-2-aminomuconate + NADH + 2 H(+). Strongly inhibited by Ag(+) and Hg(+), and comnpletely inhibited by p-chloromercuribenzoic acid. Involved in the modified meta-cleavage pathway for 2-aminophenol catabolism. The enzyme is also active toward 2-hydroxymuconic 6-semialdehyde, acetaldehyde, propionaldehyde, and butyraldehyde. This is 2-aminomuconic 6-semialdehyde dehydrogenase (amnC) from Pseudomonas sp.